Consider the following 448-residue polypeptide: Probable ribonuclease FAU-1 (448 aa).

Residues 426–448 form a disordered region; that stretch reads EAPGGKICTSEGLTSALPQSSSA. The segment covering 436–448 has biased composition (polar residues); the sequence is EGLTSALPQSSSA.

The protein belongs to the FAU-1 family.

Its function is as follows. Probable RNase involved in rRNA stability through maturation and/or degradation of precursor rRNAs. Binds to RNA in loop regions with AU-rich sequences. This Pyrobaculum islandicum (strain DSM 4184 / JCM 9189 / GEO3) protein is Probable ribonuclease FAU-1.